The chain runs to 132 residues: Small ribosomal subunit protein uS11 (132 aa).

The disordered stretch occupies residues 108-132 (GRIEDVTPVPHDSCRPKGGRRGRRV).

The protein belongs to the universal ribosomal protein uS11 family. Part of the 30S ribosomal subunit.

Located on the platform of the 30S subunit. The polypeptide is Small ribosomal subunit protein uS11 (Methanoregula boonei (strain DSM 21154 / JCM 14090 / 6A8)).